Reading from the N-terminus, the 360-residue chain is Phospho-N-acetylmuramoyl-pentapeptide-transferase (360 aa).

The next 10 helical transmembrane spans lie at 26–46 (AILGLLTALMFSLWWGPKLIE), 74–94 (MGGLMILGAIFISVLLWGDLG), 97–117 (YVWVMLFVLGSFGMIGFIDDY), 132–152 (WKYILQSLAALIIAFFLYTTA), 168–188 (VMPQLGAVFIVLAYFTIVGSS), 199–219 (GLAIMPTVMVAAAFALIAYLS), 236–256 (SGELVIVCTAIVGAGLGFLWF), 263–283 (VFMGDVGSLSLGAALGAIAVL), 288–308 (ILLVIMGGVFVMETVSVILQV), and 338–358 (VIVRFWIISIFLVLLGLATLK).

This sequence belongs to the glycosyltransferase 4 family. MraY subfamily. It depends on Mg(2+) as a cofactor.

Its subcellular location is the cell inner membrane. It carries out the reaction UDP-N-acetyl-alpha-D-muramoyl-L-alanyl-gamma-D-glutamyl-meso-2,6-diaminopimeloyl-D-alanyl-D-alanine + di-trans,octa-cis-undecaprenyl phosphate = di-trans,octa-cis-undecaprenyl diphospho-N-acetyl-alpha-D-muramoyl-L-alanyl-D-glutamyl-meso-2,6-diaminopimeloyl-D-alanyl-D-alanine + UMP. Its pathway is cell wall biogenesis; peptidoglycan biosynthesis. Functionally, catalyzes the initial step of the lipid cycle reactions in the biosynthesis of the cell wall peptidoglycan: transfers peptidoglycan precursor phospho-MurNAc-pentapeptide from UDP-MurNAc-pentapeptide onto the lipid carrier undecaprenyl phosphate, yielding undecaprenyl-pyrophosphoryl-MurNAc-pentapeptide, known as lipid I. The chain is Phospho-N-acetylmuramoyl-pentapeptide-transferase from Shewanella sp. (strain ANA-3).